Reading from the N-terminus, the 220-residue chain is Deoxyribose-phosphate aldolase (220 aa).

D89 (proton donor/acceptor) is an active-site residue. K151 acts as the Schiff-base intermediate with acetaldehyde in catalysis. K180 (proton donor/acceptor) is an active-site residue.

It belongs to the DeoC/FbaB aldolase family. DeoC type 1 subfamily.

The protein resides in the cytoplasm. The catalysed reaction is 2-deoxy-D-ribose 5-phosphate = D-glyceraldehyde 3-phosphate + acetaldehyde. It participates in carbohydrate degradation; 2-deoxy-D-ribose 1-phosphate degradation; D-glyceraldehyde 3-phosphate and acetaldehyde from 2-deoxy-alpha-D-ribose 1-phosphate: step 2/2. Functionally, catalyzes a reversible aldol reaction between acetaldehyde and D-glyceraldehyde 3-phosphate to generate 2-deoxy-D-ribose 5-phosphate. In Streptococcus pneumoniae (strain Hungary19A-6), this protein is Deoxyribose-phosphate aldolase.